Consider the following 302-residue polypeptide: Phosphoribosylaminoimidazole-succinocarboxamide synthase (302 aa).

Belongs to the SAICAR synthetase family.

It carries out the reaction 5-amino-1-(5-phospho-D-ribosyl)imidazole-4-carboxylate + L-aspartate + ATP = (2S)-2-[5-amino-1-(5-phospho-beta-D-ribosyl)imidazole-4-carboxamido]succinate + ADP + phosphate + 2 H(+). It functions in the pathway purine metabolism; IMP biosynthesis via de novo pathway; 5-amino-1-(5-phospho-D-ribosyl)imidazole-4-carboxamide from 5-amino-1-(5-phospho-D-ribosyl)imidazole-4-carboxylate: step 1/2. The chain is Phosphoribosylaminoimidazole-succinocarboxamide synthase from Cupriavidus pinatubonensis (strain JMP 134 / LMG 1197) (Cupriavidus necator (strain JMP 134)).